Consider the following 385-residue polypeptide: Carbamoyl phosphate synthase small chain (385 aa).

The CPSase stretch occupies residues 1-185 (MSEPAILVLA…LGKGFIEQTQ (185 aa)). 3 residues coordinate L-glutamine: Ser-47, Gly-237, and Gly-239. In terms of domain architecture, Glutamine amidotransferase type-1 spans 189 to 376 (NVVAYDFGVK…INEMRKANLS (188 aa)). Cys-265 (nucleophile) is an active-site residue. L-glutamine contacts are provided by Leu-266, Gln-269, Asn-307, Gly-309, and Phe-310. Residues His-349 and Glu-351 contribute to the active site.

The protein belongs to the CarA family. Composed of two chains; the small (or glutamine) chain promotes the hydrolysis of glutamine to ammonia, which is used by the large (or ammonia) chain to synthesize carbamoyl phosphate. Tetramer of heterodimers (alpha,beta)4.

It carries out the reaction hydrogencarbonate + L-glutamine + 2 ATP + H2O = carbamoyl phosphate + L-glutamate + 2 ADP + phosphate + 2 H(+). It catalyses the reaction L-glutamine + H2O = L-glutamate + NH4(+). Its pathway is amino-acid biosynthesis; L-arginine biosynthesis; carbamoyl phosphate from bicarbonate: step 1/1. The protein operates within pyrimidine metabolism; UMP biosynthesis via de novo pathway; (S)-dihydroorotate from bicarbonate: step 1/3. Functionally, small subunit of the glutamine-dependent carbamoyl phosphate synthetase (CPSase). CPSase catalyzes the formation of carbamoyl phosphate from the ammonia moiety of glutamine, carbonate, and phosphate donated by ATP, constituting the first step of 2 biosynthetic pathways, one leading to arginine and/or urea and the other to pyrimidine nucleotides. The small subunit (glutamine amidotransferase) binds and cleaves glutamine to supply the large subunit with the substrate ammonia. The protein is Carbamoyl phosphate synthase small chain of Pasteurella multocida (strain Pm70).